The sequence spans 434 residues: Trigger factor (434 aa).

Positions 161-246 (GDRVVIDFAG…VKGVEAPILP (86 aa)) constitute a PPIase FKBP-type domain.

It belongs to the FKBP-type PPIase family. Tig subfamily.

Its subcellular location is the cytoplasm. It catalyses the reaction [protein]-peptidylproline (omega=180) = [protein]-peptidylproline (omega=0). Functionally, involved in protein export. Acts as a chaperone by maintaining the newly synthesized protein in an open conformation. Functions as a peptidyl-prolyl cis-trans isomerase. In Aromatoleum aromaticum (strain DSM 19018 / LMG 30748 / EbN1) (Azoarcus sp. (strain EbN1)), this protein is Trigger factor.